The chain runs to 75 residues: ATP synthase subunit c (75 aa).

2 helical membrane-spanning segments follow: residues 13 to 33 (LSVI…GILF) and 55 to 75 (FIGL…ALII).

This sequence belongs to the ATPase C chain family. As to quaternary structure, F-type ATPases have 2 components, F(1) - the catalytic core - and F(0) - the membrane proton channel. F(1) has five subunits: alpha(3), beta(3), gamma(1), delta(1), epsilon(1). F(0) has three main subunits: a(1), b(2) and c(10-14). The alpha and beta chains form an alternating ring which encloses part of the gamma chain. F(1) is attached to F(0) by a central stalk formed by the gamma and epsilon chains, while a peripheral stalk is formed by the delta and b chains.

Its subcellular location is the cell membrane. Functionally, f(1)F(0) ATP synthase produces ATP from ADP in the presence of a proton or sodium gradient. F-type ATPases consist of two structural domains, F(1) containing the extramembraneous catalytic core and F(0) containing the membrane proton channel, linked together by a central stalk and a peripheral stalk. During catalysis, ATP synthesis in the catalytic domain of F(1) is coupled via a rotary mechanism of the central stalk subunits to proton translocation. In terms of biological role, key component of the F(0) channel; it plays a direct role in translocation across the membrane. A homomeric c-ring of between 10-14 subunits forms the central stalk rotor element with the F(1) delta and epsilon subunits. The sequence is that of ATP synthase subunit c from Bifidobacterium longum (strain DJO10A).